Reading from the N-terminus, the 655-residue chain is p-hydroxybenzoic acid efflux pump subunit AaeB (655 aa).

10 consecutive transmembrane segments (helical) span residues 13-33 (FAVK…HFQL), 38-58 (WAVL…GGEP), 69-89 (LRII…IAMI), 93-113 (LLMI…SSLV), 121-141 (WGLA…EPLL), 152-172 (EIVI…PRSI), 370-390 (LFWL…IAVV), 407-427 (FIYG…VIIP), 431-451 (QSML…GIEV), and 482-502 (FLDS…VILL).

It belongs to the aromatic acid exporter ArAE (TC 2.A.85) family.

The protein resides in the cell inner membrane. Forms an efflux pump with AaeA. Could function as a metabolic relief valve, allowing to eliminate certain compounds when they accumulate to high levels in the cell. The polypeptide is p-hydroxybenzoic acid efflux pump subunit AaeB (Shigella dysenteriae serotype 1 (strain Sd197)).